A 369-amino-acid chain; its full sequence is UDP-3-O-acylglucosamine N-acyltransferase (369 aa).

His-263 serves as the catalytic Proton acceptor.

It belongs to the transferase hexapeptide repeat family. LpxD subfamily. As to quaternary structure, homotrimer.

The catalysed reaction is a UDP-3-O-[(3R)-3-hydroxyacyl]-alpha-D-glucosamine + a (3R)-hydroxyacyl-[ACP] = a UDP-2-N,3-O-bis[(3R)-3-hydroxyacyl]-alpha-D-glucosamine + holo-[ACP] + H(+). It participates in bacterial outer membrane biogenesis; LPS lipid A biosynthesis. Catalyzes the N-acylation of UDP-3-O-acylglucosamine using 3-hydroxyacyl-ACP as the acyl donor. Is involved in the biosynthesis of lipid A, a phosphorylated glycolipid that anchors the lipopolysaccharide to the outer membrane of the cell. In Burkholderia vietnamiensis (strain G4 / LMG 22486) (Burkholderia cepacia (strain R1808)), this protein is UDP-3-O-acylglucosamine N-acyltransferase.